We begin with the raw amino-acid sequence, 1407 residues long: Trichohyalin (1407 aa).

Residues 1–91 (MSPLLKSIID…AQAAYYALGQ (91 aa)) are S-100-like. 2 EF-hand domains span residues 23-48 (CDGA…LQRP) and 49-84 (HDPE…LAQA). Ca(2+)-binding residues include Asp32, Asp62, Asp64, Asp66, and Glu73. 7 disordered regions span residues 148 to 172 (EEEE…DKEQ), 218 to 237 (LREE…RALQ), 362 to 471 (REQA…EEEQ), 486 to 587 (EQLQ…ERER), 1014 to 1033 (REEE…EEER), 1062 to 1082 (KEEK…EEQQ), and 1313 to 1407 (EQFA…QYRP). 4 stretches are compositionally biased toward basic and acidic residues: residues 362–381 (REQA…RQLE), 396–424 (RRQE…EQAR), 447–471 (SLRE…EEEQ), and 554–587 (QREK…ERER). Residues 1313 to 1376 (EQFAREEKSR…FREDQSRRQV (64 aa)) are compositionally biased toward basic and acidic residues.

This sequence belongs to the S100-fused protein family. Homodimer. In terms of processing, substrate of transglutaminase. Some 200 arginines are probably converted to citrullines by peptidylarginine deimidase. As to expression, found in the hard keratinizing tissues such as the inner root sheath (IRS) of hair follicles and medulla, and in the filiform papillae of dorsal tongue epithelium.

Intermediate filament-associated protein that associates in regular arrays with keratin intermediate filaments (KIF) of the inner root sheath cells of the hair follicle and the granular layer of the epidermis. It later becomes cross-linked to KIF by isodipeptide bonds. It may serve as scaffold protein, together with involucrin, in the organization of the cell envelope or even anchor the cell envelope to the KIF network. It may be involved in its own calcium-dependent postsynthetic processing during terminal differentiation. This is Trichohyalin (TCHH) from Oryctolagus cuniculus (Rabbit).